The sequence spans 449 residues: N-succinylarginine dihydrolase (449 aa).

Residues 19–28 (GGLSYGNVAS), N110, and 137–138 (HR) each bind substrate. Residues 23-43 (YGNVASQSNSQQGSNPREAAR) form a disordered region. A compositionally biased stretch (polar residues) spans 25 to 37 (NVASQSNSQQGSN). E174 is an active-site residue. Residue R214 participates in substrate binding. H250 is a catalytic residue. Residues D252 and N365 each coordinate substrate. The active-site Nucleophile is C371.

Belongs to the succinylarginine dihydrolase family. Homodimer.

It carries out the reaction N(2)-succinyl-L-arginine + 2 H2O + 2 H(+) = N(2)-succinyl-L-ornithine + 2 NH4(+) + CO2. It functions in the pathway amino-acid degradation; L-arginine degradation via AST pathway; L-glutamate and succinate from L-arginine: step 2/5. Its function is as follows. Catalyzes the hydrolysis of N(2)-succinylarginine into N(2)-succinylornithine, ammonia and CO(2). The protein is N-succinylarginine dihydrolase of Pseudomonas entomophila (strain L48).